The chain runs to 356 residues: Homoserine O-acetyltransferase (356 aa).

In terms of domain architecture, AB hydrolase-1 spans 49-337 (VLICHALTGS…KSTHGHDAFL (289 aa)). The active-site Nucleophile is the S143. R212 lines the substrate pocket. Residues D304 and H333 contribute to the active site. D334 contributes to the substrate binding site.

Belongs to the AB hydrolase superfamily. MetX family. As to quaternary structure, homodimer.

It is found in the cytoplasm. It carries out the reaction L-homoserine + acetyl-CoA = O-acetyl-L-homoserine + CoA. It participates in amino-acid biosynthesis; L-methionine biosynthesis via de novo pathway; O-acetyl-L-homoserine from L-homoserine: step 1/1. Its function is as follows. Transfers an acetyl group from acetyl-CoA to L-homoserine, forming acetyl-L-homoserine. In Nostoc punctiforme (strain ATCC 29133 / PCC 73102), this protein is Homoserine O-acetyltransferase.